Consider the following 281-residue polypeptide: Putative phosphatase MPN_264 (281 aa).

Asp-8 functions as the Nucleophile in the catalytic mechanism. Asp-8 is a Mg(2+) binding site. A phosphate-binding site is contributed by Leu-9. Asp-10 is a binding site for Mg(2+). Phosphate is bound by residues 44–45 and Lys-205; that span reads TG. Mg(2+) is bound by residues Asp-228 and Ser-229. Asn-231 is a binding site for phosphate.

The protein belongs to the HAD-like hydrolase superfamily. Cof family. The cofactor is Mg(2+).

The protein is Putative phosphatase MPN_264 of Mycoplasma pneumoniae (strain ATCC 29342 / M129 / Subtype 1) (Mycoplasmoides pneumoniae).